Here is a 355-residue protein sequence, read N- to C-terminus: UDP-N-acetylglucosamine--N-acetylmuramyl-(pentapeptide) pyrophosphoryl-undecaprenol N-acetylglucosamine transferase (355 aa).

UDP-N-acetyl-alpha-D-glucosamine-binding positions include 15 to 17, asparagine 127, arginine 163, serine 191, isoleucine 244, 263 to 268, and glutamine 288; these read TGG and ALTVSE.

Belongs to the glycosyltransferase 28 family. MurG subfamily.

It localises to the cell inner membrane. The catalysed reaction is di-trans,octa-cis-undecaprenyl diphospho-N-acetyl-alpha-D-muramoyl-L-alanyl-D-glutamyl-meso-2,6-diaminopimeloyl-D-alanyl-D-alanine + UDP-N-acetyl-alpha-D-glucosamine = di-trans,octa-cis-undecaprenyl diphospho-[N-acetyl-alpha-D-glucosaminyl-(1-&gt;4)]-N-acetyl-alpha-D-muramoyl-L-alanyl-D-glutamyl-meso-2,6-diaminopimeloyl-D-alanyl-D-alanine + UDP + H(+). The protein operates within cell wall biogenesis; peptidoglycan biosynthesis. Cell wall formation. Catalyzes the transfer of a GlcNAc subunit on undecaprenyl-pyrophosphoryl-MurNAc-pentapeptide (lipid intermediate I) to form undecaprenyl-pyrophosphoryl-MurNAc-(pentapeptide)GlcNAc (lipid intermediate II). The polypeptide is UDP-N-acetylglucosamine--N-acetylmuramyl-(pentapeptide) pyrophosphoryl-undecaprenol N-acetylglucosamine transferase (Salmonella gallinarum (strain 287/91 / NCTC 13346)).